The sequence spans 1242 residues: ATP-dependent helicase/nuclease subunit A (1242 aa).

The region spanning 13–486 (SQWTDDQWKA…IDLAKNFRSR (474 aa)) is the UvrD-like helicase ATP-binding domain. ATP is bound at residue 34 to 41 (AAAGSGKT). One can recognise a UvrD-like helicase C-terminal domain in the interval 506-806 (GEIEYDADAE…RIMTIHKSKG (301 aa)).

Belongs to the helicase family. AddA subfamily. As to quaternary structure, heterodimer of AddA and AddB/RexB. The cofactor is Mg(2+).

It catalyses the reaction Couples ATP hydrolysis with the unwinding of duplex DNA by translocating in the 3'-5' direction.. The enzyme catalyses ATP + H2O = ADP + phosphate + H(+). Functionally, the heterodimer acts as both an ATP-dependent DNA helicase and an ATP-dependent, dual-direction single-stranded exonuclease. Recognizes the chi site generating a DNA molecule suitable for the initiation of homologous recombination. The AddA nuclease domain is required for chi fragment generation; this subunit has the helicase and 3' -&gt; 5' nuclease activities. The polypeptide is ATP-dependent helicase/nuclease subunit A (Bacillus cytotoxicus (strain DSM 22905 / CIP 110041 / 391-98 / NVH 391-98)).